The primary structure comprises 173 residues: Dual-action ribosomal maturation protein DarP (173 aa).

The protein belongs to the DarP family.

Its subcellular location is the cytoplasm. Its function is as follows. Member of a network of 50S ribosomal subunit biogenesis factors which assembles along the 30S-50S interface, preventing incorrect 23S rRNA structures from forming. Promotes peptidyl transferase center (PTC) maturation. In Pseudomonas entomophila (strain L48), this protein is Dual-action ribosomal maturation protein DarP.